The following is a 151-amino-acid chain: uncharacterized protein (151 aa).

This is an uncharacterized protein from Archaeoglobus fulgidus (strain ATCC 49558 / DSM 4304 / JCM 9628 / NBRC 100126 / VC-16).